A 181-amino-acid chain; its full sequence is dCTP deaminase (181 aa).

Residues 100-105 (RSTFAR) and Asp-116 each bind dCTP. Glu-126 acts as the Proton donor/acceptor in catalysis. DCTP contacts are provided by Tyr-158 and Gln-165. Residues 160–181 (GKYQGQRGVTPPKLDNSSSKNF) form a disordered region.

The protein belongs to the dCTP deaminase family. In terms of assembly, homotrimer.

The catalysed reaction is dCTP + H2O + H(+) = dUTP + NH4(+). It participates in pyrimidine metabolism; dUMP biosynthesis; dUMP from dCTP (dUTP route): step 1/2. Functionally, catalyzes the deamination of dCTP to dUTP. The chain is dCTP deaminase from Desulfurococcus amylolyticus (strain DSM 18924 / JCM 16383 / VKM B-2413 / 1221n) (Desulfurococcus kamchatkensis).